Consider the following 299-residue polypeptide: rRNA methyltransferase (299 aa).

The disordered stretch occupies residues Ala14–Gly53. Residues Gly21 to Ala31 are compositionally biased toward low complexity. S-adenosyl-L-methionine contacts are provided by Asn55, Leu57, Gly82, Glu103, Asp128, and Asn144.

Belongs to the class I-like SAM-binding methyltransferase superfamily. rRNA adenine N(6)-methyltransferase family.

Functionally, probable RNA methylase. Confers resistance to carbomycin and several other macrolides, lincomycin and vernamycin B, but not to all macrolide-lincosamide-streptogramin B antibiotics. The protein is rRNA methyltransferase (carB) of Streptomyces thermotolerans.